The chain runs to 392 residues: Phospho-N-acetylmuramoyl-pentapeptide-transferase (392 aa).

10 helical membrane passes run Arg28 to Ile48, Thr74 to Phe94, Phe100 to Trp120, Tyr137 to Glu157, Val193 to Ala213, Gly225 to Thr245, Ser262 to Phe282, Val289 to Ile309, Ile314 to Val334, and Gln369 to Leu389.

The protein belongs to the glycosyltransferase 4 family. MraY subfamily. The cofactor is Mg(2+).

It is found in the cell inner membrane. The catalysed reaction is UDP-N-acetyl-alpha-D-muramoyl-L-alanyl-gamma-D-glutamyl-meso-2,6-diaminopimeloyl-D-alanyl-D-alanine + di-trans,octa-cis-undecaprenyl phosphate = di-trans,octa-cis-undecaprenyl diphospho-N-acetyl-alpha-D-muramoyl-L-alanyl-D-glutamyl-meso-2,6-diaminopimeloyl-D-alanyl-D-alanine + UMP. The protein operates within cell wall biogenesis; peptidoglycan biosynthesis. In terms of biological role, catalyzes the initial step of the lipid cycle reactions in the biosynthesis of the cell wall peptidoglycan: transfers peptidoglycan precursor phospho-MurNAc-pentapeptide from UDP-MurNAc-pentapeptide onto the lipid carrier undecaprenyl phosphate, yielding undecaprenyl-pyrophosphoryl-MurNAc-pentapeptide, known as lipid I. The sequence is that of Phospho-N-acetylmuramoyl-pentapeptide-transferase from Variovorax paradoxus (strain S110).